The primary structure comprises 338 residues: GTPase Obg (338 aa).

The region spanning 1 to 159 is the Obg domain; it reads MSFIDEVKIH…RWLRLELKLM (159 aa). Positions 160–331 constitute an OBG-type G domain; the sequence is ADVGLLGMPS…LLDEIARNLW (172 aa). Residues 166 to 173, 191 to 195, 213 to 216, 283 to 286, and 312 to 314 contribute to the GTP site; these read GMPSVGKS, FTTLK, DIPG, NKID, and SAA. Mg(2+) contacts are provided by Ser-173 and Thr-193.

Belongs to the TRAFAC class OBG-HflX-like GTPase superfamily. OBG GTPase family. Monomer. Mg(2+) is required as a cofactor.

It localises to the cytoplasm. Its function is as follows. An essential GTPase which binds GTP, GDP and possibly (p)ppGpp with moderate affinity, with high nucleotide exchange rates and a fairly low GTP hydrolysis rate. Plays a role in control of the cell cycle, stress response, ribosome biogenesis and in those bacteria that undergo differentiation, in morphogenesis control. The protein is GTPase Obg of Geotalea uraniireducens (strain Rf4) (Geobacter uraniireducens).